Consider the following 378-residue polypeptide: Atypical chemokine receptor 2 (378 aa).

The Extracellular segment spans residues 1–49; sequence MPTVASPLPLTTVGSENSSSIYDYDYLDDMTILVCRKDEVLSFGRVFLP. A glycan (N-linked (GlcNAc...) asparagine) is linked at Asn-17. A helical membrane pass occupies residues 50–70; the sequence is VVYSLIFVLGLAGNLLLLVVL. Residues 71 to 91 are Cytoplasmic-facing; the sequence is LHSAPRRRTMELYLLNLAVSN. A helical membrane pass occupies residues 92–112; sequence LLFVVTMPFWAISVAWHWVFG. Residues 113–117 are Extracellular-facing; sequence SFLCK. A disulfide bridge connects residues Cys-116 and Cys-194. The helical transmembrane segment at 118–139 threads the bilayer; the sequence is VISTLYSINFYCGIFFITCMSL. Residues 140-161 lie on the Cytoplasmic side of the membrane; it reads DKYLEIVHAQPLHRPKAQFRNL. Residues 162-182 form a helical membrane-spanning segment; the sequence is LLIVMVWITSLAISVPEMVFV. Over 183–216 the chain is Extracellular; the sequence is QIHQTLDGVWHCYADFGGHATIWKLYLRFQLNLL. Residues 217-237 traverse the membrane as a helical segment; it reads GFLLPLLAMIFFYSRIGCVLV. Over 238–249 the chain is Cytoplasmic; it reads RLRPPGQGRALR. The chain crosses the membrane as a helical span at residues 250 to 270; sequence MAAALVIVFFMLWFPYNLTLF. Residues 271–292 lie on the Extracellular side of the membrane; it reads LHSLLDLHVFGNCEISHRLDYT. A helical transmembrane segment spans residues 293–313; it reads LQVTESLAFSHCCFTPVLYAF. At 314–378 the chain is on the cytoplasmic side; that stretch reads CSHRFRRYLK…SLNKGEMGNT (65 aa). Residues 326–378 form a C-terminal cytoplasmic tail region; that stretch reads LSVMLRWHQAPGTPSSNHSESSRVTAQEDVVSMNDLGERQSEDSLNKGEMGNT.

Belongs to the G-protein coupled receptor 1 family. Atypical chemokine receptor subfamily. Post-translationally, phosphorylated on serine residues in the C-terminal cytoplasmic tail. In terms of tissue distribution, expressed on apoptotic neutrophils (at protein level).

The protein localises to the early endosome. It localises to the recycling endosome. Its subcellular location is the cell membrane. Functionally, atypical chemokine receptor that controls chemokine levels and localization via high-affinity chemokine binding that is uncoupled from classic ligand-driven signal transduction cascades, resulting instead in chemokine sequestration, degradation, or transcytosis. Also known as interceptor (internalizing receptor) or chemokine-scavenging receptor or chemokine decoy receptor. Acts as a receptor for chemokines including CCL2, CCL3, CCL3L1, CCL4, CCL5, CCL7, CCL8, CCL11, CCL13, CCL17, CCL22, CCL23, CCL24, SCYA2/MCP-1, SCY3/MIP-1-alpha, SCYA5/RANTES and SCYA7/MCP-3. Upon active ligand stimulation, activates a beta-arrestin 1 (ARRB1)-dependent, G protein-independent signaling pathway that results in the phosphorylation of the actin-binding protein cofilin (CFL1) through a RAC1-PAK1-LIMK1 signaling pathway. Activation of this pathway results in up-regulation of ACKR2 from endosomal compartment to cell membrane, increasing its efficiency in chemokine uptake and degradation. By scavenging chemokines in tissues, on the surfaces of lymphatic vessels, and in placenta, plays an essential role in the resolution (termination) of the inflammatory response and in the regulation of adaptive immune responses. Plays a major role in the immune silencing of macrophages during the resolution of inflammation. Acts as a regulator of inflammatory leukocyte interactions with lymphatic endothelial cells (LECs) and is required for immature/mature dendritic cells discrimination by LECs. In Mus musculus (Mouse), this protein is Atypical chemokine receptor 2 (Ackr2).